The sequence spans 545 residues: Cryptochrome-1 (545 aa).

The 138-residue stretch at 3–140 folds into the Photolyase/cryptochrome alpha/beta domain; sequence INNILWFRHG…RCVENVSHTL (138 aa). FAD is bound by residues Arg237, Ser265, Ser267, Gln308, His375, 407 to 409, Cys413, and Asn416; that span reads DAD.

The protein belongs to the DNA photolyase class-1 family. In terms of assembly, interacts with tim and per; promoted by light conditions. Requires FAD as cofactor.

Its subcellular location is the cytoplasm. The protein resides in the perinuclear region. The protein localises to the nucleus. Its function is as follows. Blue light-dependent regulator that is the input of the circadian feedback loop. Has no photolyase activity for cyclobutane pyrimidine dimers or 6-4 photoproducts. Regulation of expression by light suggests a role in photoreception for locomotor activity rhythms. Functions, together with per, as a transcriptional repressor required for the oscillation of peripheral circadian clocks and for the correct specification of clock cells. Genes directly activated by the transcription factors Clock (Clk) and cycle (cyc) are repressed by cry. The polypeptide is Cryptochrome-1 (Anopheles gambiae (African malaria mosquito)).